Reading from the N-terminus, the 278-residue chain is SPX domain-containing protein 2 (278 aa).

Residues 1 to 162 (MKFGKSLSSQ…GSMIRLPFVQ (162 aa)) enclose the SPX domain. 2 disordered regions span residues 191-242 (PTNE…KSTV) and 255-278 (GSST…EPGR).

As to quaternary structure, interacts (via SPX domain) with PHR2 (via C-terminus). Interacts with RLI1 in the nucleus to prevents its positive regulation of leaf inclination during phosphate (Pi) starvation.

The protein localises to the nucleus. Inhibits PHR2 DNA-binding activity via a phosphate (Pi)-dependent protein interaction. Together with SPX1, plays a negative role in the regulation of leaf inclination by preventing RLI1 transcription factor activity in Pi depleted conditions. The sequence is that of SPX domain-containing protein 2 from Oryza sativa subsp. indica (Rice).